Reading from the N-terminus, the 119-residue chain is Protein TusC (119 aa).

It belongs to the DsrF/TusC family. As to quaternary structure, heterohexamer, formed by a dimer of trimers. The hexameric TusBCD complex contains 2 copies each of TusB, TusC and TusD. The TusBCD complex interacts with TusE.

It localises to the cytoplasm. Its function is as follows. Part of a sulfur-relay system required for 2-thiolation of 5-methylaminomethyl-2-thiouridine (mnm(5)s(2)U) at tRNA wobble positions. In Sodalis glossinidius (strain morsitans), this protein is Protein TusC.